A 531-amino-acid polypeptide reads, in one-letter code: UPF0159 protein CPn_0746/CP_1126/CPj0746/CpB0774 (531 aa).

ThyX domains are found at residues 38–274 and 309–511; these read KGAL…AEPH and PSVQ…FKFV.

It belongs to the UPF0159 family.

The chain is UPF0159 protein CPn_0746/CP_1126/CPj0746/CpB0774 from Chlamydia pneumoniae (Chlamydophila pneumoniae).